Reading from the N-terminus, the 397-residue chain is Oxygen-dependent coproporphyrinogen-III oxidase, chloroplastic (397 aa).

A disordered region spans residues 76–95 (ESDMGSNVTSNSSSVRGRFE). Over residues 79 to 90 (MGSNVTSNSSSV) the composition is skewed to polar residues. An important for dimerization region spans residues 135 to 144 (VLQDGAVFEK). Ser185 serves as a coordination point for substrate. The Proton donor role is filled by His199. Substrate-binding positions include 201 to 203 (NYR) and 355 to 360 (GGRIES). The important for dimerization stretch occupies residues 337 to 372 (YVEFNLVYDRGTTFGLKTGGRIESILVSLPLTARWE).

It belongs to the aerobic coproporphyrinogen-III oxidase family. In terms of assembly, homodimer.

Its subcellular location is the plastid. It localises to the chloroplast. It carries out the reaction coproporphyrinogen III + O2 + 2 H(+) = protoporphyrinogen IX + 2 CO2 + 2 H2O. It functions in the pathway porphyrin-containing compound metabolism; protoporphyrin-IX biosynthesis; protoporphyrinogen-IX from coproporphyrinogen-III (O2 route): step 1/1. Its function is as follows. Involved in the heme and chlorophyll biosynthesis. Catalyzes the aerobic oxidative decarboxylation of propionate groups of rings A and B of coproporphyrinogen-III to yield the vinyl groups in protoporphyrinogen-IX. This chain is Oxygen-dependent coproporphyrinogen-III oxidase, chloroplastic (CPX), found in Nicotiana tabacum (Common tobacco).